Here is a 384-residue protein sequence, read N- to C-terminus: Queuine tRNA-ribosyltransferase (384 aa).

Asp103 (proton acceptor) is an active-site residue. Substrate-binding positions include 103-107 (DSGGF), Asp157, Gln200, and Gly227. The segment at 258–264 (GVGTYRE) is RNA binding. The Nucleophile role is filled by Asp277. The RNA binding; important for wobble base 34 recognition stretch occupies residues 282–286 (TRLAR). Positions 315, 317, 320, and 346 each coordinate Zn(2+).

The protein belongs to the queuine tRNA-ribosyltransferase family. As to quaternary structure, homodimer. Within each dimer, one monomer is responsible for RNA recognition and catalysis, while the other monomer binds to the replacement base PreQ1. The cofactor is Zn(2+).

The enzyme catalyses 7-aminomethyl-7-carbaguanine + guanosine(34) in tRNA = 7-aminomethyl-7-carbaguanosine(34) in tRNA + guanine. It functions in the pathway tRNA modification; tRNA-queuosine biosynthesis. Catalyzes the base-exchange of a guanine (G) residue with the queuine precursor 7-aminomethyl-7-deazaguanine (PreQ1) at position 34 (anticodon wobble position) in tRNAs with GU(N) anticodons (tRNA-Asp, -Asn, -His and -Tyr). Catalysis occurs through a double-displacement mechanism. The nucleophile active site attacks the C1' of nucleotide 34 to detach the guanine base from the RNA, forming a covalent enzyme-RNA intermediate. The proton acceptor active site deprotonates the incoming PreQ1, allowing a nucleophilic attack on the C1' of the ribose to form the product. After dissociation, two additional enzymatic reactions on the tRNA convert PreQ1 to queuine (Q), resulting in the hypermodified nucleoside queuosine (7-(((4,5-cis-dihydroxy-2-cyclopenten-1-yl)amino)methyl)-7-deazaguanosine). In Synechococcus elongatus (strain ATCC 33912 / PCC 7942 / FACHB-805) (Anacystis nidulans R2), this protein is Queuine tRNA-ribosyltransferase.